Here is a 545-residue protein sequence, read N- to C-terminus: Carboxylesterase 5A (545 aa).

An N-terminal signal peptide occupies residues Met-1–Ala-28. Asn-86 carries N-linked (GlcNAc...) (complex) asparagine glycosylation. Residues Cys-94 and Cys-121 are joined by a disulfide bond. A glycan (N-linked (GlcNAc...) asparagine) is linked at Asn-134. Catalysis depends on Ser-226, which acts as the Acyl-ester intermediate. The cysteines at positions 281 and 292 are disulfide-linked. Catalysis depends on Glu-346, which acts as the Charge relay system. Asn-363 and Asn-443 each carry an N-linked (GlcNAc...) asparagine glycan. The active-site Charge relay system is His-454.

Belongs to the type-B carboxylesterase/lipase family. N-glycosylated; contains a fucosylated complex carbohydrate. As to expression, present at high level in urine. Expressed in the kidney proximal straight tubular cells and is secreted from the apical compartment of the cells into the urine (at protein level). In mature cats, it is present at higher level in intact males than in castrated males or in intact or spayed females.

The protein resides in the secreted. The catalysed reaction is a carboxylic ester + H2O = an alcohol + a carboxylate + H(+). Its function is as follows. Carboxylesterase present at high level in urine that regulates production of felinine, a probable pheromone precursor. Probably acts by hydrolyzing the peptide bond of the felinine precursor 3-methylbutanol cyteinylglycine, producing felinine and glycine in cat urine. The sequence is that of Carboxylesterase 5A (CES5A) from Felis catus (Cat).